The primary structure comprises 407 residues: Melanoma-associated antigen B6B (407 aa).

A compositionally biased stretch (basic residues) spans 1–16; the sequence is MPRGQKSKLRARGKRR. A disordered region spans residues 1–185; that stretch reads MPRGQKSKLR…ESLSSSKRAA (185 aa). 2 stretches are compositionally biased toward polar residues: residues 56–68 and 94–109; these read SGSS…QGAS and PSTS…SQGA. Positions 123–132 are enriched in basic and acidic residues; the sequence is KSDEAAKGQN. Residues 133–155 show a composition bias toward polar residues; that stretch reads EKSPSTSRDASVPQESQGASPTG. The MAGE domain occupies 195–394; it reads IKRKANKMVQ…GLYPHLYEDA (200 aa).

This Homo sapiens (Human) protein is Melanoma-associated antigen B6B.